The primary structure comprises 317 residues: DNA-directed RNA polymerase subunit alpha (317 aa).

The tract at residues 1-234 (MKQFVRPEFI…AHLEFFIDLN (234 aa)) is alpha N-terminal domain (alpha-NTD). The interval 249-317 (DDKELDRTVE…ASLGLAFRQS (69 aa)) is alpha C-terminal domain (alpha-CTD).

The protein belongs to the RNA polymerase alpha chain family. As to quaternary structure, homodimer. The RNAP catalytic core consists of 2 alpha, 1 beta, 1 beta' and 1 omega subunit. When a sigma factor is associated with the core the holoenzyme is formed, which can initiate transcription.

It catalyses the reaction RNA(n) + a ribonucleoside 5'-triphosphate = RNA(n+1) + diphosphate. In terms of biological role, DNA-dependent RNA polymerase catalyzes the transcription of DNA into RNA using the four ribonucleoside triphosphates as substrates. The sequence is that of DNA-directed RNA polymerase subunit alpha from Mycoplasma capricolum subsp. capricolum (strain California kid / ATCC 27343 / NCTC 10154).